The primary structure comprises 236 residues: Small ribosomal subunit protein uS2c (236 aa).

This sequence belongs to the universal ribosomal protein uS2 family.

It localises to the plastid. The protein localises to the chloroplast. The polypeptide is Small ribosomal subunit protein uS2c (rps2) (Ipomoea purpurea (Common morning glory)).